Here is a 330-residue protein sequence, read N- to C-terminus: Malate dehydrogenase (330 aa).

12 to 18 provides a ligand contact to NAD(+); it reads GAAGQIG. Residues Arg-93 and Arg-99 each contribute to the substrate site. NAD(+)-binding positions include Asn-106, Gln-113, and 130 to 132; that span reads VGN. The substrate site is built by Asn-132 and Arg-163. His-188 (proton acceptor) is an active-site residue.

It belongs to the LDH/MDH superfamily. MDH type 2 family.

It carries out the reaction (S)-malate + NAD(+) = oxaloacetate + NADH + H(+). Functionally, catalyzes the reversible oxidation of malate to oxaloacetate. This Legionella pneumophila (strain Lens) protein is Malate dehydrogenase.